A 189-amino-acid polypeptide reads, in one-letter code: Cancer/testis antigen family 45 member A10 (189 aa).

Belongs to the CT45 family.

Its subcellular location is the nucleus. The chain is Cancer/testis antigen family 45 member A10 from Homo sapiens (Human).